Here is a 110-residue protein sequence, read N- to C-terminus: Phosphoribosyl-AMP cyclohydrolase (110 aa).

Residue Asp80 participates in Mg(2+) binding. Cys81 serves as a coordination point for Zn(2+). Residues Asp82 and Asp84 each contribute to the Mg(2+) site. 2 residues coordinate Zn(2+): Cys97 and Cys104.

The protein belongs to the PRA-CH family. As to quaternary structure, homodimer. The cofactor is Mg(2+). Requires Zn(2+) as cofactor.

It localises to the cytoplasm. The enzyme catalyses 1-(5-phospho-beta-D-ribosyl)-5'-AMP + H2O = 1-(5-phospho-beta-D-ribosyl)-5-[(5-phospho-beta-D-ribosylamino)methylideneamino]imidazole-4-carboxamide. It participates in amino-acid biosynthesis; L-histidine biosynthesis; L-histidine from 5-phospho-alpha-D-ribose 1-diphosphate: step 3/9. Catalyzes the hydrolysis of the adenine ring of phosphoribosyl-AMP. This Clostridium botulinum (strain Kyoto / Type A2) protein is Phosphoribosyl-AMP cyclohydrolase.